Reading from the N-terminus, the 251-residue chain is Ubiquinone/menaquinone biosynthesis C-methyltransferase UbiE (251 aa).

S-adenosyl-L-methionine is bound by residues Thr74, Asp95, 123–124, and Ser140; that span reads NA.

The protein belongs to the class I-like SAM-binding methyltransferase superfamily. MenG/UbiE family.

The catalysed reaction is a 2-demethylmenaquinol + S-adenosyl-L-methionine = a menaquinol + S-adenosyl-L-homocysteine + H(+). It catalyses the reaction a 2-methoxy-6-(all-trans-polyprenyl)benzene-1,4-diol + S-adenosyl-L-methionine = a 5-methoxy-2-methyl-3-(all-trans-polyprenyl)benzene-1,4-diol + S-adenosyl-L-homocysteine + H(+). The protein operates within quinol/quinone metabolism; menaquinone biosynthesis; menaquinol from 1,4-dihydroxy-2-naphthoate: step 2/2. Its pathway is cofactor biosynthesis; ubiquinone biosynthesis. Its function is as follows. Methyltransferase required for the conversion of demethylmenaquinol (DMKH2) to menaquinol (MKH2) and the conversion of 2-polyprenyl-6-methoxy-1,4-benzoquinol (DDMQH2) to 2-polyprenyl-3-methyl-6-methoxy-1,4-benzoquinol (DMQH2). This is Ubiquinone/menaquinone biosynthesis C-methyltransferase UbiE from Proteus mirabilis (strain HI4320).